Here is a 238-residue protein sequence, read N- to C-terminus: Sugar fermentation stimulation protein homolog (238 aa).

It belongs to the SfsA family.

The sequence is that of Sugar fermentation stimulation protein homolog from Actinobacillus succinogenes (strain ATCC 55618 / DSM 22257 / CCUG 43843 / 130Z).